A 151-amino-acid chain; its full sequence is Large ribosomal subunit protein bL9 (151 aa).

This sequence belongs to the bacterial ribosomal protein bL9 family.

Functionally, binds to the 23S rRNA. This chain is Large ribosomal subunit protein bL9, found in Chlorobium phaeobacteroides (strain DSM 266 / SMG 266 / 2430).